A 593-amino-acid chain; its full sequence is UvrABC system protein C (593 aa).

Residues 17–94 form the GIY-YIG domain; sequence MEPGCYLMKD…IKQYQPRYNI (78 aa). Residues 199–234 enclose the UVR domain; it reads KTILKSLEERMLTASESLDFERAKEYRDLIQHIQNL.

The protein belongs to the UvrC family. As to quaternary structure, interacts with UvrB in an incision complex.

It is found in the cytoplasm. Functionally, the UvrABC repair system catalyzes the recognition and processing of DNA lesions. UvrC both incises the 5' and 3' sides of the lesion. The N-terminal half is responsible for the 3' incision and the C-terminal half is responsible for the 5' incision. The protein is UvrABC system protein C of Staphylococcus aureus (strain USA300).